Reading from the N-terminus, the 474-residue chain is Trifunctional enzyme subunit beta, mitochondrial (474 aa).

A mitochondrion-targeting transit peptide spans 1–33 (MTILTYPFKNLPTASKWALRFSIRPLSCSSQLR). Lys-72 is subject to N6-acetyllysine; alternate. The residue at position 72 (Lys-72) is an N6-succinyllysine; alternate. Cys-138 (acyl-thioester intermediate) is an active-site residue. Residues 173–220 (IRHSRKMRKLMLDLNKAKSMGQRLSLISKFRFNFLAPELPAVSEFSTS) lie within the membrane without spanning it. Lys-188 carries the N6-acetyllysine; alternate modification. The residue at position 188 (Lys-188) is an N6-succinyllysine; alternate. Residues Lys-190, Lys-272, and Lys-291 each carry the N6-succinyllysine modification. The residue at position 293 (Lys-293) is an N6-acetyllysine; alternate. Lys-293 bears the N6-succinyllysine; alternate mark. An N6-acetyllysine modification is found at Lys-298. N6-acetyllysine; alternate is present on Lys-332. Lys-332 bears the N6-succinyllysine; alternate mark. 2 positions are modified to N6-acetyllysine: Lys-348 and Lys-361. The Proton donor/acceptor role is filled by Cys-458.

Belongs to the thiolase-like superfamily. Thiolase family. In terms of assembly, heterotetramer of 2 alpha/HADHA and 2 beta/HADHB subunits; forms the mitochondrial trifunctional enzyme. Also purified as higher order heterooligomers including a 4 alpha/HADHA and 4 beta/HADHB heterooligomer which physiological significance remains unclear. The mitochondrial trifunctional enzyme interacts with MTLN. Interacts with RSAD2/viperin.

It is found in the mitochondrion. Its subcellular location is the mitochondrion inner membrane. The protein localises to the mitochondrion outer membrane. It localises to the endoplasmic reticulum. It catalyses the reaction an acyl-CoA + acetyl-CoA = a 3-oxoacyl-CoA + CoA. The enzyme catalyses butanoyl-CoA + acetyl-CoA = 3-oxohexanoyl-CoA + CoA. It carries out the reaction hexanoyl-CoA + acetyl-CoA = 3-oxooctanoyl-CoA + CoA. The catalysed reaction is octanoyl-CoA + acetyl-CoA = 3-oxodecanoyl-CoA + CoA. It catalyses the reaction decanoyl-CoA + acetyl-CoA = 3-oxododecanoyl-CoA + CoA. The enzyme catalyses dodecanoyl-CoA + acetyl-CoA = 3-oxotetradecanoyl-CoA + CoA. It carries out the reaction tetradecanoyl-CoA + acetyl-CoA = 3-oxohexadecanoyl-CoA + CoA. It participates in lipid metabolism; fatty acid beta-oxidation. Functionally, mitochondrial trifunctional enzyme catalyzes the last three of the four reactions of the mitochondrial beta-oxidation pathway. The mitochondrial beta-oxidation pathway is the major energy-producing process in tissues and is performed through four consecutive reactions breaking down fatty acids into acetyl-CoA. Among the enzymes involved in this pathway, the trifunctional enzyme exhibits specificity for long-chain fatty acids. Mitochondrial trifunctional enzyme is a heterotetrameric complex composed of two proteins, the trifunctional enzyme subunit alpha/HADHA carries the 2,3-enoyl-CoA hydratase and the 3-hydroxyacyl-CoA dehydrogenase activities, while the trifunctional enzyme subunit beta/HADHB described here bears the 3-ketoacyl-CoA thiolase activity. The protein is Trifunctional enzyme subunit beta, mitochondrial (HADHB) of Homo sapiens (Human).